The sequence spans 496 residues: MDDKQHTSSSDDERAEIATSNQDQETNSSKRVHLKRWQFISILIGTILITAVITVVAYIFINQKISGLNKTDQANLNKIENVYKILNSDYYKKQDSDKLSKAAIDGMVKELKDPYSEYLTKEQTKSFNEGVSGDFVGIGAEMQKKNDQIMVTSPMKGSPAERAGIRPKDVITKVNGKSIKGKALDEVVKDVRGKENTEVTLTVQRGSEEKDVKIKREKIHVKSVEYKKKGKVGVITINKFQNDTSGELKDAVLKAHKDGLKKIVLDLRNNPGGLLDEAVKMANIFIDKGKTVVKLEKGKDTEAIQTSNDALKEAKDMDISILVNEGSASASEVFTGALKDYNKAKVYGSKTFGKGVVQTTREFKDGSLLKYTEMKWLTPDGHYIHGKGIKPDVTIDTPKYQSLNVIPNTKTFKVGDDDKNIKTIKIGLSALGYKVDNETTQFDQALENQVKAFQQANKLEVTGEFNKETNNKFTELLVEKANKHDDVLDKLINILK.

Basic and acidic residues predominate over residues 1-16; the sequence is MDDKQHTSSSDDERAE. A disordered region spans residues 1 to 27; that stretch reads MDDKQHTSSSDDERAEIATSNQDQETN. The segment covering 18 to 27 has biased composition (polar residues); it reads ATSNQDQETN. Residues 39 to 59 form a helical membrane-spanning segment; the sequence is FISILIGTILITAVITVVAYI. One can recognise a PDZ domain in the interval 124 to 206; that stretch reads TKSFNEGVSG…TEVTLTVQRG (83 aa). Residues Ser329, Asp340, and Lys354 each act as charge relay system in the active site.

The protein belongs to the peptidase S41A family.

The protein localises to the cell membrane. The sequence is that of Probable CtpA-like serine protease from Staphylococcus aureus (strain MSSA476).